Consider the following 552-residue polypeptide: 5'-AMP-activated protein kinase catalytic subunit alpha-2 (552 aa).

Positions 16–268 (YVLGDTLGVG…IKDIREHEWF (253 aa)) constitute a Protein kinase domain. Residues 22–30 (LGVGTFGKV) and Lys-45 each bind ATP. Asp-139 serves as the catalytic Proton acceptor. Residue Thr-172 is modified to Phosphothreonine; by LKB1 and CaMKK2. At Thr-258 the chain carries Phosphothreonine. Residues 291-376 (EAVKEVCEKF…PERMPPLIAD (86 aa)) form an AIS region. At Ser-377 the chain carries Phosphoserine. A disordered region spans residues 477–521 (VEQRSGSSTPQRSCSAAGLHRPRSSFDSTTAESHSLSGSLTGSLT). The segment covering 480 to 490 (RSGSSTPQRSC) has biased composition (polar residues). A Phosphoserine modification is found at Ser-491. A compositionally biased stretch (polar residues) spans 501–510 (SFDSTTAESH). A compositionally biased stretch (low complexity) spans 511–521 (SLSGSLTGSLT).

Belongs to the protein kinase superfamily. CAMK Ser/Thr protein kinase family. SNF1 subfamily. AMPK is a heterotrimer of an alpha catalytic subunit (PRKAA1 or PRKAA2), a beta (PRKAB1 or PRKAB2) and a gamma non-catalytic subunits (PRKAG1, PRKAG2 or PRKAG3). Interacts with FNIP1 and FNIP2. Interacts with DUSP29. Interacts with ARF6. The phosphorylated form at Thr-172 mediated by CamKK2 interacts with ACSS2. Requires Mg(2+) as cofactor. Ubiquitinated. In terms of processing, phosphorylated at Thr-172 by STK11/LKB1 in complex with STE20-related adapter-alpha (STRADA) pseudo kinase and CAB39. Also phosphorylated at Thr-172 by CAMKK2; triggered by a rise in intracellular calcium ions, without detectable changes in the AMP/ATP ratio. CAMKK1 can also phosphorylate Thr-172, but at much lower level. Dephosphorylated by protein phosphatase 2A and 2C (PP2A and PP2C). Phosphorylated by ULK1; leading to negatively regulate AMPK activity and suggesting the existence of a regulatory feedback loop between ULK1 and AMPK. Dephosphorylated by PPM1A and PPM1B at Thr-172 (mediated by STK11/LKB1).

The protein localises to the cytoplasm. It is found in the nucleus. The catalysed reaction is L-seryl-[protein] + ATP = O-phospho-L-seryl-[protein] + ADP + H(+). It carries out the reaction L-threonyl-[protein] + ATP = O-phospho-L-threonyl-[protein] + ADP + H(+). The enzyme catalyses L-seryl-[acetyl-CoA carboxylase] + ATP = O-phospho-L-seryl-[acetyl-CoA carboxylase] + ADP + H(+). It catalyses the reaction L-seryl-[3-hydroxy-3-methylglutaryl-coenzyme A reductase] + ATP = O-phospho-L-seryl-[3-hydroxy-3-methylglutaryl-coenzyme A reductase] + ADP + H(+). Its activity is regulated as follows. Activated by phosphorylation on Thr-172. Binding of AMP to non-catalytic gamma subunit (PRKAG1, PRKAG2 or PRKAG3) results in allosteric activation, inducing phosphorylation on Thr-172. AMP-binding to gamma subunit also sustains activity by preventing dephosphorylation of Thr-172. ADP also stimulates Thr-172 phosphorylation, without stimulating already phosphorylated AMPK. ATP promotes dephosphorylation of Thr-172, rendering the enzyme inactive. Under physiological conditions AMPK mainly exists in its inactive form in complex with ATP, which is much more abundant than AMP. Selectively inhibited by compound C (6-[4-(2-Piperidin-1-yl-ethoxy)-phenyl)]-3-pyridin-4-yl-pyyrazolo[1,5-a] pyrimidine. Activated by resveratrol, a natural polyphenol present in red wine, and S17834, a synthetic polyphenol. Salicylate/aspirin directly activates kinase activity, primarily by inhibiting Thr-172 dephosphorylation. Its function is as follows. Catalytic subunit of AMP-activated protein kinase (AMPK), an energy sensor protein kinase that plays a key role in regulating cellular energy metabolism. In response to reduction of intracellular ATP levels, AMPK activates energy-producing pathways and inhibits energy-consuming processes: inhibits protein, carbohydrate and lipid biosynthesis, as well as cell growth and proliferation. AMPK acts via direct phosphorylation of metabolic enzymes, and by longer-term effects via phosphorylation of transcription regulators. Regulates lipid synthesis by phosphorylating and inactivating lipid metabolic enzymes such as ACACA, ACACB, GYS1, HMGCR and LIPE; regulates fatty acid and cholesterol synthesis by phosphorylating acetyl-CoA carboxylase (ACACA and ACACB) and hormone-sensitive lipase (LIPE) enzymes, respectively. Promotes lipolysis of lipid droplets by mediating phosphorylation of isoform 1 of CHKA (CHKalpha2). Regulates insulin-signaling and glycolysis by phosphorylating IRS1, PFKFB2 and PFKFB3. Involved in insulin receptor/INSR internalization. AMPK stimulates glucose uptake in muscle by increasing the translocation of the glucose transporter SLC2A4/GLUT4 to the plasma membrane, possibly by mediating phosphorylation of TBC1D4/AS160. Regulates transcription and chromatin structure by phosphorylating transcription regulators involved in energy metabolism such as CRTC2/TORC2, FOXO3, histone H2B, HDAC5, MEF2C, MLXIPL/ChREBP, EP300, HNF4A, p53/TP53, SREBF1, SREBF2 and PPARGC1A. Acts as a key regulator of glucose homeostasis in liver by phosphorylating CRTC2/TORC2, leading to CRTC2/TORC2 sequestration in the cytoplasm. In response to stress, phosphorylates 'Ser-36' of histone H2B (H2BS36ph), leading to promote transcription. Acts as a key regulator of cell growth and proliferation by phosphorylating FNIP1, TSC2, RPTOR, WDR24 and ATG1/ULK1: in response to nutrient limitation, negatively regulates the mTORC1 complex by phosphorylating RPTOR component of the mTORC1 complex and by phosphorylating and activating TSC2. Also phosphorylates and inhibits GATOR2 subunit WDR24 in response to nutrient limitation, leading to suppress glucose-mediated mTORC1 activation. In response to energetic stress, phosphorylates FNIP1, inactivating the non-canonical mTORC1 signaling, thereby promoting nuclear translocation of TFEB and TFE3, and inducing transcription of lysosomal or autophagy genes. In response to nutrient limitation, promotes autophagy by phosphorylating and activating ATG1/ULK1. In that process also activates WDR45/WIPI4. Phosphorylates CASP6, thereby preventing its autoprocessing and subsequent activation. AMPK also acts as a regulator of circadian rhythm by mediating phosphorylation of CRY1, leading to destabilize it. May regulate the Wnt signaling pathway by phosphorylating CTNNB1, leading to stabilize it. Also acts as a regulator of cellular polarity by remodeling the actin cytoskeleton; probably by indirectly activating myosin. Also phosphorylates CFTR, EEF2K, KLC1, NOS3 and SLC12A1. Plays an important role in the differential regulation of pro-autophagy (composed of PIK3C3, BECN1, PIK3R4 and UVRAG or ATG14) and non-autophagy (composed of PIK3C3, BECN1 and PIK3R4) complexes, in response to glucose starvation. Can inhibit the non-autophagy complex by phosphorylating PIK3C3 and can activate the pro-autophagy complex by phosphorylating BECN1. Upon glucose starvation, promotes ARF6 activation in a kinase-independent manner leading to cell migration. Upon glucose deprivation mediates the phosphorylation of ACSS2 at 'Ser-659', which exposes the nuclear localization signal of ACSS2, required for its interaction with KPNA1 and nuclear translocation. Upon stress, regulates mitochondrial fragmentation through phosphorylation of MTFR1L. In Pongo abelii (Sumatran orangutan), this protein is 5'-AMP-activated protein kinase catalytic subunit alpha-2 (PRKAA2).